A 455-amino-acid chain; its full sequence is Secreted triacylglycerol lipase LIP4 (455 aa).

The N-terminal stretch at 1 to 19 (MKLNLFILGLLTLAAHAYA) is a signal peptide. Asparagine 98 is a glycosylation site (N-linked (GlcNAc...) asparagine). Cysteines 115 and 284 form a disulfide. The active-site Nucleophile is serine 197. An N-linked (GlcNAc...) asparagine glycan is attached at asparagine 230. Active-site residues include aspartate 344 and histidine 378. Cysteine 360 and cysteine 406 form a disulfide bridge.

Belongs to the AB hydrolase superfamily. Lipase family. Class Lip subfamily.

It is found in the secreted. Its subcellular location is the cell wall. It catalyses the reaction a triacylglycerol + H2O = a diacylglycerol + a fatty acid + H(+). The catalysed reaction is a monoacylglycerol + H2O = glycerol + a fatty acid + H(+). It carries out the reaction a diacylglycerol + H2O = a monoacylglycerol + a fatty acid + H(+). In terms of biological role, secreted lipase involved in Dandruff and seborrheic dermatitis (D/SD) probably via lipase-mediated breakdown of sebaceous lipids and release of irritating free fatty acids. Has triacylglycerol lipase activity and is able to hydrolyze triolein. Mostly converts monoolein to di- and triolein, while free fatty acids are only produced in low amounts. The sequence is that of Secreted triacylglycerol lipase LIP4 from Malassezia globosa (strain ATCC MYA-4612 / CBS 7966) (Dandruff-associated fungus).